The following is a 663-amino-acid chain: Cytoplasmic dynein 1 intermediate chain (663 aa).

Over residues 17-37 (LREEKDRRRREKEIKDMEEAA) the composition is skewed to basic and acidic residues. Disordered regions lie at residues 17 to 52 (LREE…DQRK) and 75 to 107 (SVNS…KKQP). The span at 75 to 85 (SVNSMTSDNSN) shows a compositional bias: low complexity. The segment covering 86–99 (TQTPDASLQATVNG) has biased composition (polar residues). 7 WD repeats span residues 311-360 (SKNR…STPE), 364-404 (HCQS…RTPI), 413-454 (AHTH…QPQD), 463-503 (SKAI…SGVN), 508-553 (RHLG…PLYS), 556-596 (DNSD…EVPT), and 602-641 (AGAP…AQPS).

This sequence belongs to the dynein intermediate chain family. In terms of assembly, homodimer. The cytoplasmic dynein 1 complex consists of two catalytic heavy chains (HCs) and a number of non-catalytic subunits presented by intermediate chains (ICs), light intermediate chains (LICs) and light chains (LCs). In terms of tissue distribution, high levels of isoform 1b, isoform 1c, isoform 3a and isoform 4 accumulate in early egg chambers and at stage 9 become concentrated at the posterior of the oocyte. Isoform 5a and isoform 5b are highly expressed in adult head and to a lesser extent in adult torso. Isoform 1a, isoform 2a and isoform 2b are found in all tissues examined, including ovaries, midgut, torso and head.

The protein resides in the cytoplasm. Its subcellular location is the cytoskeleton. The protein localises to the lysosome membrane. It localises to the nucleus membrane. Functionally, acts as one of several non-catalytic accessory components of the cytoplasmic dynein 1 complex that are thought to be involved in linking dynein to cargos and to adapter proteins that regulate dynein function. Cytoplasmic dynein 1 acts as a motor for the intracellular retrograde motility of vesicles and organelles along microtubules. The intermediate chains mediate the help dynein bind to dynactin 150 kDa component. This Drosophila melanogaster (Fruit fly) protein is Cytoplasmic dynein 1 intermediate chain (sw).